A 129-amino-acid chain; its full sequence is M-zodatoxin-Lt8f (129 aa).

Residues 1 to 20 (MKYFVVALALVAAFACIAES) form the signal peptide. A propeptide spanning residues 21–60 (KPAESEHELAEVEEENELADLEDAVWLEHLADLSDLEEAR) is cleaved from the precursor. Positions 57–60 (EEAR) match the Processing quadruplet motif motif.

Post-translationally, cleavage of the propeptide depends on the processing quadruplet motif (XXXR, with at least one of X being E). Expressed by the venom gland.

It is found in the secreted. In terms of biological role, insecticidal, cytolytic and antimicrobial peptide. Has insecticidal activity against the flesh fly S.carnaria. Has antibacterial activity against the Gram-negative bacteria E.coli. Forms voltage-dependent, ion-permeable channels in membranes. At high concentration causes cell membrane lysis. In Lachesana tarabaevi (Spider), this protein is M-zodatoxin-Lt8f (cit 1-7).